The sequence spans 383 residues: Fructose-1,6-bisphosphate aldolase/phosphatase (383 aa).

Asp-11 (proton acceptor; for FBP phosphatase activity) is an active-site residue. Mg(2+) is bound by residues Asp-11, His-18, Asp-52, and Asp-53. His-18 provides a ligand contact to beta-D-fructose 1,6-bisphosphate. Dihydroxyacetone phosphate is bound at residue His-18. Tyr-90 provides a ligand contact to beta-D-fructose 1,6-bisphosphate. A Mg(2+)-binding site is contributed by Gln-94. Position 103-104 (103-104 (GN)) interacts with beta-D-fructose 1,6-bisphosphate. Residue Asp-131 coordinates Mg(2+). A beta-D-fructose 1,6-bisphosphate-binding site is contributed by Lys-132. A dihydroxyacetone phosphate-binding site is contributed by Lys-132. Tyr-228 functions as the Proton donor/acceptor; for FBP aldolase activity in the catalytic mechanism. Lys-231, Asp-232, and Asp-233 together coordinate Mg(2+). Lys-231 acts as the Schiff-base intermediate with DHAP; for FBP aldolase activity in catalysis. Residues 241 to 242 (QH), Arg-265, Asp-286, and Tyr-347 each bind beta-D-fructose 1,6-bisphosphate. Dihydroxyacetone phosphate-binding residues include Arg-265 and Asp-286. Positions 361–383 (FKKEEDVKKAKPSVYTSKDQGMD) are disordered. Residues 374-383 (VYTSKDQGMD) show a composition bias toward polar residues.

Belongs to the FBP aldolase/phosphatase family. As to quaternary structure, homooctamer; dimer of tetramers. Mg(2+) serves as cofactor.

The catalysed reaction is beta-D-fructose 1,6-bisphosphate + H2O = beta-D-fructose 6-phosphate + phosphate. It catalyses the reaction beta-D-fructose 1,6-bisphosphate = D-glyceraldehyde 3-phosphate + dihydroxyacetone phosphate. Its pathway is carbohydrate biosynthesis; gluconeogenesis. In terms of biological role, catalyzes two subsequent steps in gluconeogenesis: the aldol condensation of dihydroxyacetone phosphate (DHAP) and glyceraldehyde-3-phosphate (GA3P) to fructose-1,6-bisphosphate (FBP), and the dephosphorylation of FBP to fructose-6-phosphate (F6P). This is Fructose-1,6-bisphosphate aldolase/phosphatase from Metallosphaera sedula (strain ATCC 51363 / DSM 5348 / JCM 9185 / NBRC 15509 / TH2).